We begin with the raw amino-acid sequence, 391 residues long: Deoxyguanosinetriphosphate triphosphohydrolase-like protein (391 aa).

Residues 62–198 (RLTHSLEVST…ASLADDISYI (137 aa)) form the HD domain.

The protein belongs to the dGTPase family. Type 2 subfamily.

This Rickettsia akari (strain Hartford) protein is Deoxyguanosinetriphosphate triphosphohydrolase-like protein.